The chain runs to 238 residues: Survival of motor neuron-related-splicing factor 30 (238 aa).

In terms of domain architecture, Tudor spans 72–132 (SWKVGDKCMA…KPVEEGRKAK (61 aa)). Residues 142 to 160 (KKEMIAQQREYKKKKALKK) carry the Nuclear localization signal motif. Residue Ser201 is modified to Phosphoserine. N6-acetyllysine is present on Lys219.

It belongs to the SMN family. Associates with spliceosomes. Associates with U4/U5/U6 tri-snRNP and with U2 snRNP.

It localises to the nucleus speckle. The protein resides in the nucleus. It is found in the cajal body. Involved in spliceosome assembly. The sequence is that of Survival of motor neuron-related-splicing factor 30 (Smndc1) from Rattus norvegicus (Rat).